We begin with the raw amino-acid sequence, 207 residues long: Oligoribonuclease (207 aa).

Residues 8 to 172 (LVWIDCEMTG…ADILESVREL (165 aa)) form the Exonuclease domain. The active site involves Y129.

Belongs to the oligoribonuclease family.

It is found in the cytoplasm. 3'-to-5' exoribonuclease specific for small oligoribonucleotides. This chain is Oligoribonuclease, found in Leifsonia xyli subsp. xyli (strain CTCB07).